The primary structure comprises 745 residues: Heterogeneous nuclear ribonucleoprotein U-like protein 2 (745 aa).

The SAP domain occupies 3 to 37 (VKRLKVTELRSELQRRGLDSRGLKMDLAQRLQEAL). Disordered stretches follow at residues 44–239 (DEAG…DEEE) and 625–664 (EEAR…GQRR). A compositionally biased stretch (acidic residues) spans 73–97 (GDEEEEDDDEEEDEEALLEDEDEEP). Residues 142 to 161 (GEEHDNGKGEEDGPEERSGD) are compositionally biased toward basic and acidic residues. At serine 159 the chain carries Phosphoserine. Threonine 163 is subject to Phosphothreonine. Phosphoserine occurs at positions 166, 183, 186, 224, and 226. Basic and acidic residues predominate over residues 183–221 (SEKSKPAGSDGERRGVKRQRDEKDEHGRAYYEFREEAYH). One can recognise a B30.2/SPRY domain in the interval 224–417 (SKSPPPPEEE…VELNFGQKEE (194 aa)). Residues 230-239 (PEEEAKDEEE) are compositionally biased toward acidic residues. Residues 625-637 (EEARKLLPPSEKR) are compositionally biased toward basic and acidic residues. The segment covering 638 to 652 (TNRRNNRNKRNRQNR) has biased composition (basic residues). Arginine 654, arginine 682, arginine 736, and arginine 745 each carry omega-N-methylarginine.

Binds to MLF1 and retains it in the nucleus.

It localises to the nucleus. The protein is Heterogeneous nuclear ribonucleoprotein U-like protein 2 (Hnrnpul2) of Mus musculus (Mouse).